Consider the following 377-residue polypeptide: Nitric oxide reductase FlRd-NAD(+) reductase (377 aa).

Belongs to the FAD-dependent oxidoreductase family. Requires FAD as cofactor.

The protein resides in the cytoplasm. The enzyme catalyses 2 reduced [nitric oxide reductase rubredoxin domain] + NAD(+) + H(+) = 2 oxidized [nitric oxide reductase rubredoxin domain] + NADH. It functions in the pathway nitrogen metabolism; nitric oxide reduction. One of at least two accessory proteins for anaerobic nitric oxide (NO) reductase. Reduces the rubredoxin moiety of NO reductase. In Klebsiella pneumoniae subsp. pneumoniae (strain ATCC 700721 / MGH 78578), this protein is Nitric oxide reductase FlRd-NAD(+) reductase.